We begin with the raw amino-acid sequence, 81 residues long: uncharacterized protein (81 aa).

The segment at 55 to 81 (LDKRNSNNKIEKSENTGENHDNNQDQK) is disordered.

This is an uncharacterized protein from Thermoproteus tenax virus 1 (strain KRA1) (TTV1).